Consider the following 190-residue polypeptide: Peptidyl-tRNA hydrolase (190 aa).

Tyr18 is a tRNA binding site. The active-site Proton acceptor is His23. TRNA-binding residues include Phe65, Asn67, and Asn113.

The protein belongs to the PTH family. As to quaternary structure, monomer.

It localises to the cytoplasm. It catalyses the reaction an N-acyl-L-alpha-aminoacyl-tRNA + H2O = an N-acyl-L-amino acid + a tRNA + H(+). Its function is as follows. Hydrolyzes ribosome-free peptidyl-tRNAs (with 1 or more amino acids incorporated), which drop off the ribosome during protein synthesis, or as a result of ribosome stalling. In terms of biological role, catalyzes the release of premature peptidyl moieties from peptidyl-tRNA molecules trapped in stalled 50S ribosomal subunits, and thus maintains levels of free tRNAs and 50S ribosomes. The polypeptide is Peptidyl-tRNA hydrolase (Akkermansia muciniphila (strain ATCC BAA-835 / DSM 22959 / JCM 33894 / BCRC 81048 / CCUG 64013 / CIP 107961 / Muc)).